The following is a 47-amino-acid chain: PhoP/PhoQ regulator MgrB (47 aa).

The chain crosses the membrane as a helical span at residues 6 to 26 (WVLLIVIIAGCLLLWTQMLNV).

It belongs to the MgrB family. In terms of assembly, may form homooligomers. Probably interacts with the periplasmic domain of PhoQ.

It localises to the cell inner membrane. In terms of biological role, phoP-regulated transcription is redox-sensitive, being activated when the periplasm becomes more reducing. MgrB acts between DsbA/DsbB and PhoP/PhoQ in this pathway. Represses PhoP/PhoQ signaling, possibly by binding to the periplasmic domain of PhoQ, altering its activity and that of downstream effector PhoP. The chain is PhoP/PhoQ regulator MgrB from Klebsiella pneumoniae (strain 342).